Reading from the N-terminus, the 156-residue chain is Succinate dehydrogenase assembly factor 2-B, mitochondrial (156 aa).

The transit peptide at methionine 1–leucine 24 directs the protein to the mitochondrion.

The protein belongs to the SDHAF2 family. As to quaternary structure, interacts with the flavoprotein subunit within the SDH catalytic dimer.

Its subcellular location is the mitochondrion matrix. Functionally, plays an essential role in the assembly of succinate dehydrogenase (SDH), an enzyme complex (also referred to as respiratory complex II) that is a component of both the tricarboxylic acid (TCA) cycle and the mitochondrial electron transport chain, and which couples the oxidation of succinate to fumarate with the reduction of ubiquinone (coenzyme Q) to ubiquinol. Required for flavinylation (covalent attachment of FAD) of the flavoprotein subunit of the SDH catalytic dimer. The protein is Succinate dehydrogenase assembly factor 2-B, mitochondrial of Drosophila erecta (Fruit fly).